The primary structure comprises 493 residues: Xaa-Pro dipeptidase (493 aa).

Ala-2 carries the post-translational modification N-acetylalanine. Ser-167 bears the Phosphoserine mark. Residue His-255 participates in a dipeptide binding. Residues Asp-276, Asp-287, and His-370 each contribute to the Mn(2+) site. Asp-287 lines the a dipeptide pocket. A dipeptide-binding residues include His-377 and Arg-398. Mn(2+) is bound by residues Glu-412 and Glu-452.

Belongs to the peptidase M24B family. Eukaryotic-type prolidase subfamily. As to quaternary structure, homodimer. Mn(2+) is required as a cofactor.

The catalysed reaction is Xaa-L-Pro dipeptide + H2O = an L-alpha-amino acid + L-proline. Specifically inhibited by the pseudodipeptide CQ31. Inhibition by CQ31 indirectly activates the CARD8 inflammasome: dipeptide accumulation following PEPD inactivation weaky inhibit dipeptidyl peptidases DDP8 and DPP9, relieving DPP8- and/or DPP9-mediated inhibition of CARD8. Its function is as follows. Dipeptidase that catalyzes the hydrolysis of dipeptides with a prolyl (Xaa-Pro) or hydroxyprolyl residue in the C-terminal position. The preferred dipeptide substrate is Gly-Pro, but other Xaa-Pro dipeptides, such as Ala-Pro, Met-Pro, Phe-Pro, Val-Pro and Leu-Pro, can be cleaved. Plays an important role in collagen metabolism because the high level of iminoacids in collagen. This is Xaa-Pro dipeptidase from Homo sapiens (Human).